Consider the following 500-residue polypeptide: Formate-nitrite transporter 3 (500 aa).

At 1 to 31 (MVLAASPEAYRKVIEYGIKKTKLRIDRLFLQ) the chain is on the cytoplasmic side. A helical membrane pass occupies residues 32–52 (AIMAGIYVGMAGHACTALAGA). At 53 to 69 (YSTDPANPLAVSKATQK) the chain is on the extracellular side. The helical transmembrane segment at 70–90 (FLYASLFPVAFIAIIFTGAEL) threads the bilayer. Residues 91-113 (FTGNTMTMLVCLLERRVTALQLC) lie on the Cytoplasmic side of the membrane. Residues 114-134 (INWICSLVGNWAGALFAAYFL) form a helical membrane-spanning segment. Over 135–164 (SYLPGVLQDPDHLHYLEDVAAHKTELSFLQ) the chain is Extracellular. A helical membrane pass occupies residues 165–185 (CFCLAVGCNTFVCLAVWFVIA). The Cytoplasmic portion of the chain corresponds to 186–192 (SDDAAGK). A helical transmembrane segment spans residues 193–213 (IMSMWFPIVSFCVAGYEHIIA). The Extracellular segment spans residues 214 to 237 (NFYTLQCALMHGVGPGVGTVILKN). The chain crosses the membrane as a helical span at residues 238-258 (FIPTLLGNIVGGCGLVGAVYW). Topologically, residues 259–500 (YNFYPTVCVV…ALEEHPASTI (242 aa)) are cytoplasmic. The interval 411–500 (PLRENSGVPS…ALEEHPASTI (90 aa)) is disordered. Composition is skewed to basic and acidic residues over residues 428–444 (GRVR…RGGE) and 466–485 (FHPH…ETRV).

This sequence belongs to the FNT transporter (TC 1.A.16) family. As to quaternary structure, homopentamer.

It localises to the cell membrane. It carries out the reaction (S)-lactate(in) + H(+)(in) = (S)-lactate(out) + H(+)(out). The enzyme catalyses formate(in) + H(+)(in) = formate(out) + H(+)(out). It catalyses the reaction pyruvate(out) + H(+)(out) = pyruvate(in) + H(+)(in). The catalysed reaction is acetate(out) + H(+)(out) = acetate(in) + H(+)(in). Its activity is regulated as follows. Inhibited by p-chloromercuribenzene sulfonate (pCMBS). Methyl methanethiosulfonate (MMTS) inhibits L-lactate but not formate transport. Inhibited by the Malaria Box compound MMV007839. Inhibited by BH-296, BH-317, BH-326 and BH-388 compounds. Monocarboxylate-proton symporter; active in acidic-to-neutral pH range. Transports L-lactate and formate. This chain is Formate-nitrite transporter 3, found in Toxoplasma gondii (strain ATCC 50611 / Me49).